We begin with the raw amino-acid sequence, 268 residues long: TATA-box-binding protein (268 aa).

Residues 1–24 (MDSLTTHPATAQQARAFTSPSSLS) show a composition bias toward polar residues. Positions 1-86 (MDSLTTHPAT…TPAATPGASA (86 aa)) are disordered. The segment covering 50–86 (NGQSANGNVNGQQQGANAANGNGVMPATPAATPGASA) has biased composition (low complexity). 2 tandem repeats follow at residues 95–171 (LQNI…ARII) and 185–262 (IQNI…YPVL).

It belongs to the TBP family. Belongs to the TFIID complex together with the TBP-associated factors (TAFs). Binds DNA as monomer.

The protein resides in the nucleus. In terms of biological role, general transcription factor that functions at the core of the DNA-binding multiprotein factor TFIID. Binding of TFIID to the TATA box is the initial transcriptional step of the pre-initiation complex (PIC), playing a role in the activation of eukaryotic genes transcribed by RNA polymerase II. The chain is TATA-box-binding protein (tbpA) from Emericella nidulans (strain FGSC A4 / ATCC 38163 / CBS 112.46 / NRRL 194 / M139) (Aspergillus nidulans).